The chain runs to 221 residues: Agamous-like MADS-box protein AGL14 (221 aa).

The MADS-box domain maps to 3-57; it reads RGKTEMKRIENATSRQVTFSKRRNGLLKKAFELSVLCDAEVALIIFSPRGKLYEF. The region spanning 87–177 is the K-box domain; the sequence is SQQSKDETYG…MEKCEMQGRG (91 aa).

Interacts with AGL16. As to expression, preferentially expressed in roots. Expressed in lateral root cap, root epidermis, root endodermis, columella of the root meristematic region, the vascular cylinder in differentiated zones of the primary root and in emerged lateral root primordia. Expressed in pollen.

The protein localises to the nucleus. In terms of biological role, transcriptional activator that regulates root development by controlling meristem size and patterning of the root apical meristem. Regulates auxin transport and gradients in the root meristematic cells via direct regulation of the auxin efflux carrier PIN1 and PIN4 gene expression. Binds specifically to the CArG-box DNA sequences in the promoter regions of PIN1 and PIN4 genes. Involved in the regulation of shoot apical meristem (SAM) cell identities and transitions. Promotes flowering transition and participates in flower meristem maintenance and determinacy. Positively regulates TFL1 and WUS expression. Binds directly to the TFL1 regulatory sequences. The sequence is that of Agamous-like MADS-box protein AGL14 from Arabidopsis thaliana (Mouse-ear cress).